The sequence spans 141 residues: uncharacterized protein (141 aa).

Residues 1–61 (IRLLHSLTPP…PPPPPPPRRA (61 aa)) form a disordered region. Residues 8 to 58 (TPPPPPPPPPPPPPPPPPPPPPPPPPPPPPPPPPPPPPPPPPPPPPPPPPP) show a composition bias toward pro residues. The H-T-H motif DNA-binding region spans 98 to 116 (KRLLVAYPVRHFLSAACQF).

This is an uncharacterized protein from Owenia fusiformis (Polychaete worm).